Reading from the N-terminus, the 252-residue chain is MQGAFLNNRIILQSYHIKKRLYSKRTSSLHSRFLQPTYRKNICQISKPIFQQDLSTNTNFISKLKSPFSNLKMSNLKQPLVWIDCEMTGLEVGKHVLMEVAAIITDGNLRPVEEKFDAVIKLDEKQLSEMNDWCIEQHGKSGLTERCRQSNLTVKDVENQLLAYIKKYIPKKREALIAGNSVHADVRFLSVEMPKIIEHLHYRIIDVSTIKELAKRWCPDIPAYDKKGDHRALSDILESIGELQHYRSYWLS.

The Exonuclease domain maps to V81–G241. Residue Y202 is part of the active site.

This sequence belongs to the oligoribonuclease family.

It localises to the cytoplasm. The protein localises to the nucleus. Functionally, 3'-to-5' exoribonuclease specific for small oligoribonucleotides. This chain is Probable oligoribonuclease (rex2), found in Schizosaccharomyces pombe (strain 972 / ATCC 24843) (Fission yeast).